We begin with the raw amino-acid sequence, 130 residues long: Small ribosomal subunit protein uS8 (130 aa).

It belongs to the universal ribosomal protein uS8 family. In terms of assembly, part of the 30S ribosomal subunit.

Its function is as follows. One of the primary rRNA binding proteins, it binds directly to 16S rRNA central domain where it helps coordinate assembly of the platform of the 30S subunit. The sequence is that of Small ribosomal subunit protein uS8 from Methanosphaerula palustris (strain ATCC BAA-1556 / DSM 19958 / E1-9c).